Consider the following 290-residue polypeptide: Agroclavine dehydrogenase (290 aa).

The protein belongs to the fgaFS/easG family. Monomer.

It carries out the reaction agroclavine + NADP(+) = didehydroagroclavine + NADPH + H(+). It participates in alkaloid biosynthesis; ergot alkaloid biosynthesis. Its function is as follows. Agroclavine dehydrogenase; part of the gene cluster that mediates the biosynthesis of fungal ergot alkaloid. DmaW catalyzes the first step of ergot alkaloid biosynthesis by condensing dimethylallyl diphosphate (DMAP) and tryptophan to form 4-dimethylallyl-L-tryptophan. The second step is catalyzed by the methyltransferase easF that methylates 4-dimethylallyl-L-tryptophan in the presence of S-adenosyl-L-methionine, resulting in the formation of 4-dimethylallyl-L-abrine. The catalase easC and the FAD-dependent oxidoreductase easE then transform 4-dimethylallyl-L-abrine to chanoclavine-I which is further oxidized by easD in the presence of NAD(+), resulting in the formation of chanoclavine-I aldehyde. Agroclavine dehydrogenase easG then mediates the conversion of chanoclavine-I aldehyde to agroclavine via a non-enzymatic adduct reaction: the substrate is an iminium intermediate that is formed spontaneously from chanoclavine-I aldehyde in the presence of glutathione. The presence of easA is not required to complete this reaction. Further conversion of agroclavine to paspalic acid is a two-step process involving oxidation of agroclavine to elymoclavine and of elymoclavine to paspalic acid, the second step being performed by the elymoclavine oxidase cloA. Paspalic acid is then further converted to D-lysergic acid. Ergopeptines are assembled from D-lysergic acid and three different amino acids by the D-lysergyl-peptide-synthetases composed each of a monomudular and a trimodular nonribosomal peptide synthetase subunit. LpsB and lpsC encode the monomodular subunits responsible for D-lysergic acid activation and incorporation into the ergopeptine backbone. LpsA1 and A2 subunits encode the trimodular nonribosomal peptide synthetase assembling the tripeptide portion of ergopeptines. LpsA1 is responsible for formation of the major ergopeptine, ergotamine, and lpsA2 for alpha-ergocryptine, the minor ergopeptine of the total alkaloid mixture elaborated by C.purpurea. D-lysergyl-tripeptides are assembled by the nonribosomal peptide synthetases and released as N-(D-lysergyl-aminoacyl)-lactams. Cyclolization of the D-lysergyl-tripeptides is performed by the Fe(2+)/2-ketoglutarate-dependent dioxygenase easH which introduces a hydroxyl group into N-(D-lysergyl-aminoacyl)-lactam at alpha-C of the aminoacyl residue followed by spontaneous condensation with the terminal lactam carbonyl group. In Claviceps purpurea (strain 20.1) (Ergot fungus), this protein is Agroclavine dehydrogenase.